Consider the following 249-residue polypeptide: DNA polymerase sliding clamp 3 (249 aa).

Belongs to the PCNA family. As to quaternary structure, homotrimer. The subunits circularize to form a toroid; DNA passes through its center. Replication factor C (RFC) is required to load the toroid on the DNA.

Functionally, sliding clamp subunit that acts as a moving platform for DNA processing. Responsible for tethering the catalytic subunit of DNA polymerase and other proteins to DNA during high-speed replication. The sequence is that of DNA polymerase sliding clamp 3 from Aeropyrum pernix (strain ATCC 700893 / DSM 11879 / JCM 9820 / NBRC 100138 / K1).